Consider the following 111-residue polypeptide: Protein IDA-LIKE 5 (111 aa).

Positions 1–27 (MGNKRIKAMMILVVMIMMVFSWRICEA) are cleaved as a signal peptide. Positions 46–56 (RRPNPRNHHHQ) are enriched in basic residues. Residues 46–65 (RRPNPRNHHHQNQGFNGDDY) form a disordered region.

Expressed mainly in flowers. Lower levels in buds and seedlings. Detected in vascular tissues and in hydathodes.

The protein resides in the secreted. It localises to the extracellular space. Functionally, may be involved in floral abscission. In Arabidopsis thaliana (Mouse-ear cress), this protein is Protein IDA-LIKE 5 (IDL5).